The chain runs to 349 residues: Peptide chain release factor 1 (349 aa).

The residue at position 233 (glutamine 233) is an N5-methylglutamine.

The protein belongs to the prokaryotic/mitochondrial release factor family. In terms of processing, methylated by PrmC. Methylation increases the termination efficiency of RF1.

The protein resides in the cytoplasm. Its function is as follows. Peptide chain release factor 1 directs the termination of translation in response to the peptide chain termination codons UAG and UAA. In Pelotomaculum thermopropionicum (strain DSM 13744 / JCM 10971 / SI), this protein is Peptide chain release factor 1.